Reading from the N-terminus, the 20-residue chain is Apidaecin 1+ (20 aa).

The tract at residues 1 to 20 is disordered; that stretch reads GKPNRPRPAPIQPRPPHPRL.

Belongs to the apidaecin family.

It is found in the secreted. In terms of biological role, antimicrobial peptide active against many Gram-negative enterobacterial and plant-associated bacterial species. Not active against other bacterial species like H.pylori, P.mirabilis, B.pertussis or N.gonorrhoeae. Its function is as follows. Among others, also active against C.jejuni and L.pneumophila but not against Y.enterocolitica. Functionally, among others, also active against Y.enterocolitica butnot against L.pneumophila and C.jejuni. This is Apidaecin 1+ from Pimpla disparis (Parasitic wasp).